A 396-amino-acid chain; its full sequence is Phosphoglycerate kinase (396 aa).

Residues 21-23 (DFN), Arg37, 60-63 (HLGR), Arg121, and Arg154 contribute to the substrate site. ATP is bound by residues Lys205, Gly296, Glu327, and 353-356 (GGDS).

This sequence belongs to the phosphoglycerate kinase family. In terms of assembly, monomer.

It localises to the cytoplasm. It carries out the reaction (2R)-3-phosphoglycerate + ATP = (2R)-3-phospho-glyceroyl phosphate + ADP. It functions in the pathway carbohydrate degradation; glycolysis; pyruvate from D-glyceraldehyde 3-phosphate: step 2/5. In Anaeromyxobacter sp. (strain Fw109-5), this protein is Phosphoglycerate kinase.